Consider the following 138-residue polypeptide: MRTFWIVAVLLVGVEGNLLQFNKMIKIMTKKNAIPFYTSYGCYCGWGGRGRPKDATDRCCFVHDCCYEKLTDCSPKTARYSYSWKSGVIICGEGTPCEKQICECDRAAAVCFGANLSTYKKRYMFYPDLLCTDPSEKC.

Residues 1–16 (MRTFWIVAVLLVGVEG) form the signal peptide. Cystine bridges form between cysteine 42–cysteine 131, cysteine 44–cysteine 60, cysteine 59–cysteine 111, cysteine 65–cysteine 138, cysteine 66–cysteine 104, cysteine 73–cysteine 97, and cysteine 91–cysteine 102. The Ca(2+) site is built by tyrosine 43, glycine 45, and glycine 47. Histidine 63 is an active-site residue. Aspartate 64 contacts Ca(2+). Aspartate 105 is a catalytic residue.

Monomer. Ca(2+) serves as cofactor. In terms of tissue distribution, expressed by the venom gland.

It localises to the secreted. The catalysed reaction is a 1,2-diacyl-sn-glycero-3-phosphocholine + H2O = a 1-acyl-sn-glycero-3-phosphocholine + a fatty acid + H(+). Snake venom phospholipase A2 (PLA2) that shows myotoxic activities. PLA2 catalyzes the calcium-dependent hydrolysis of the 2-acyl groups in 3-sn-phosphoglycerides. This Crotalus lepidus lepidus (Mottled rock rattlesnake) protein is Basic phospholipase A2 Cll-N6.